The primary structure comprises 571 residues: Isthmin-2 (571 aa).

The N-terminal stretch at 1–26 is a signal peptide; the sequence is MRALRDRAGLLLCVLLLAALLEAALG. Disordered regions lie at residues 30-60, 116-141, and 257-294; these read KKPR…LKEE, ANTT…LREE, and EKDR…DEEE. Residues 116–131 show a composition bias toward polar residues; it reads ANTTLSTPNPDTQASA. A glycan (N-linked (GlcNAc...) asparagine) is linked at Asn-117. The segment covering 257 to 268 has biased composition (basic and acidic residues); the sequence is EKDRAPGEKGEE. Residues 269–294 show a composition bias toward acidic residues; that stretch reads KEEDEDYPSEDIEGEDQEDKEEDEEE. Asn-300 carries N-linked (GlcNAc...) asparagine glycosylation. One can recognise a TSP type-1 domain in the interval 327 to 371; sequence EPQKEWSPWSPCSGNCSTGKQQRTRPCGYGCTATETRTCDLPSCP. 3 disulfide bridges follow: Cys-338–Cys-365, Cys-342–Cys-370, and Cys-353–Cys-357. The N-linked (GlcNAc...) asparagine glycan is linked to Asn-392. Positions 396-559 constitute an AMOP domain; it reads MHDQDVDSCE…RACTDNPLEE (164 aa).

Belongs to the isthmin family. In terms of tissue distribution, expressed at high levels in the placenta and at moderate levels in the pancreas, kidney, heart, liver, lung, brain and skeletal muscle.

It localises to the secreted. This Homo sapiens (Human) protein is Isthmin-2 (ISM2).